The chain runs to 272 residues: 3-methyl-2-oxobutanoate hydroxymethyltransferase (272 aa).

2 residues coordinate Mg(2+): Asp50 and Asp89. 3-methyl-2-oxobutanoate contacts are provided by residues 50 to 51 (DS), Asp89, and Lys119. Residue Glu121 coordinates Mg(2+). The Proton acceptor role is filled by Glu188.

Belongs to the PanB family. As to quaternary structure, homodecamer; pentamer of dimers. It depends on Mg(2+) as a cofactor.

Its subcellular location is the cytoplasm. It catalyses the reaction 3-methyl-2-oxobutanoate + (6R)-5,10-methylene-5,6,7,8-tetrahydrofolate + H2O = 2-dehydropantoate + (6S)-5,6,7,8-tetrahydrofolate. Its pathway is cofactor biosynthesis; (R)-pantothenate biosynthesis; (R)-pantoate from 3-methyl-2-oxobutanoate: step 1/2. Functionally, catalyzes the reversible reaction in which hydroxymethyl group from 5,10-methylenetetrahydrofolate is transferred onto alpha-ketoisovalerate to form ketopantoate. This chain is 3-methyl-2-oxobutanoate hydroxymethyltransferase, found in Methylobacterium radiotolerans (strain ATCC 27329 / DSM 1819 / JCM 2831 / NBRC 15690 / NCIMB 10815 / 0-1).